Here is a 377-residue protein sequence, read N- to C-terminus: MQTPSQEEVRRAVAAARTVVVKVGSSSLTQPSGHLDVDKLNALVGAIAQVRMLGGNIVLVSSGAIAAGFGPLGFESRPTDVATQQATASVGQGLLMAQYEMAFGRYGIRVGQLLITAEDTMQPRQYRNARRTMAKLLELGVVPIVNENDALASNEIRFGDNDRLSALIANMVRADALILLTDVDALYTAPPSEPGSHRIGFVPNITELLDQVRVGGSESGVGTGGMVTKLEAARMAAVSGIPAVLTAARNAGPALMGDEVGTAFAPVKQRGSARRLWIKFAAHPRGVLVADSGAAKAVRGGRASLLAAGVLESRGDFAAGDPVWIDDEAGNHLARGLAGYDSEEIPNMLGRNTAQLRRLLGEEYAHPLVHRDNLVLV.

Residue Lys-22 participates in ATP binding. Residues Ser-62, Asp-149, and Asn-161 each contribute to the substrate site. ATP is bound by residues 181 to 182 (TD) and 223 to 229 (TGGMVTK). Residues 285–363 (RGVLVADSGA…AQLRRLLGEE (79 aa)) form the PUA domain.

Belongs to the glutamate 5-kinase family.

The protein localises to the cytoplasm. The catalysed reaction is L-glutamate + ATP = L-glutamyl 5-phosphate + ADP. It participates in amino-acid biosynthesis; L-proline biosynthesis; L-glutamate 5-semialdehyde from L-glutamate: step 1/2. Functionally, catalyzes the transfer of a phosphate group to glutamate to form L-glutamate 5-phosphate. The polypeptide is Glutamate 5-kinase (Bifidobacterium animalis subsp. lactis (strain AD011)).